A 222-amino-acid chain; its full sequence is Large ribosomal subunit protein uL1 (222 aa).

Belongs to the universal ribosomal protein uL1 family. In terms of assembly, part of the 50S ribosomal subunit.

Its function is as follows. Binds directly to 23S rRNA. Probably involved in E site tRNA release. In terms of biological role, protein L1 is also a translational repressor protein, it controls the translation of its operon by binding to its mRNA. The protein is Large ribosomal subunit protein uL1 of Pyrobaculum arsenaticum (strain DSM 13514 / JCM 11321 / PZ6).